Here is a 194-residue protein sequence, read N- to C-terminus: NADH-quinone oxidoreductase subunit B (194 aa).

The [4Fe-4S] cluster site is built by Cys-73, Cys-74, Cys-138, and Cys-168.

Belongs to the complex I 20 kDa subunit family. As to quaternary structure, NDH-1 is composed of 14 different subunits. Subunits NuoB, C, D, E, F, and G constitute the peripheral sector of the complex. [4Fe-4S] cluster is required as a cofactor.

It is found in the cell inner membrane. It catalyses the reaction a quinone + NADH + 5 H(+)(in) = a quinol + NAD(+) + 4 H(+)(out). NDH-1 shuttles electrons from NADH, via FMN and iron-sulfur (Fe-S) centers, to quinones in the respiratory chain. The immediate electron acceptor for the enzyme in this species is believed to be ubiquinone. Couples the redox reaction to proton translocation (for every two electrons transferred, four hydrogen ions are translocated across the cytoplasmic membrane), and thus conserves the redox energy in a proton gradient. The chain is NADH-quinone oxidoreductase subunit B from Bradyrhizobium sp. (strain BTAi1 / ATCC BAA-1182).